The sequence spans 562 residues: Protein TBF1 (562 aa).

The disordered stretch occupies residues 376–414 (ASMSNSSSGPHSSHNNSSNSNNNGSIGLRKPKAKRTWSK). The span at 377-400 (SMSNSSSGPHSSHNNSSNSNNNGS) shows a compositional bias: low complexity. The region spanning 404-460 (RKPKAKRTWSKEEEEALVEGLKEVGPSWSKILDLYGPGGKITENLKNRTQVQLKDKA) is the HTH myb-type domain. Residues 431–456 (WSKILDLYGPGGKITENLKNRTQVQL) constitute a DNA-binding region (H-T-H motif). The segment at 495-562 (FSQSPNSSTI…GFDPHLEDGM (68 aa)) is disordered. 2 stretches are compositionally biased toward polar residues: residues 496–522 (SQSP…ATED) and 532–552 (GQNS…SDNT).

In terms of assembly, homodimer.

It is found in the nucleus. Its subcellular location is the chromosome. The protein localises to the telomere. Its function is as follows. Binds the telomeric double-stranded TTAGGG repeat and negatively regulates telomere length. Involved in the regulation of gene expression. 52 binding sites have been identified, distributed over 15 chromosomes. A member of the general regulatory factors (GRFs) which act as genome partitioners. Acts as a chromatin insulator which are known as STARs (Subtelomeric anti-silencing region). STARs prevent negative or positive transcription influence by extending across chromatin to a promoter. The protein is Protein TBF1 (TBF1) of Saccharomyces cerevisiae (strain ATCC 204508 / S288c) (Baker's yeast).